The primary structure comprises 67 residues: Prokaryotic ubiquitin-like protein Pup (67 aa).

Positions 1 to 13 (MAGQEQQQPQSRD) are enriched in low complexity. The segment at 1-48 (MAGQEQQQPQSRDSQVDEDIPEAPPAPPEAQASASTEGVDDLLDEIDG) is disordered. Residues 25–61 (PAPPEAQASASTEGVDDLLDEIDGVLESNAEEFVRAF) form an ARC ATPase binding region. Residues 38 to 48 (GVDDLLDEIDG) are compositionally biased toward acidic residues. Gln-67 is subject to Deamidated glutamine. Residue Gln-67 forms an Isoglutamyl lysine isopeptide (Gln-Lys) (interchain with K-? in acceptor proteins) linkage.

Belongs to the prokaryotic ubiquitin-like protein family. As to quaternary structure, strongly interacts with the proteasome-associated ATPase ARC through a hydrophobic interface; the interacting region of Pup lies in its C-terminal half. There is one Pup binding site per ARC hexamer ring. Is modified by deamidation of its C-terminal glutamine to glutamate by the deamidase Dop, a prerequisite to the subsequent pupylation process.

Its pathway is protein degradation; proteasomal Pup-dependent pathway. Its function is as follows. Protein modifier that is covalently attached to lysine residues of substrate proteins, thereby targeting them for proteasomal degradation. The tagging system is termed pupylation. This is Prokaryotic ubiquitin-like protein Pup from Pseudarthrobacter chlorophenolicus (strain ATCC 700700 / DSM 12829 / CIP 107037 / JCM 12360 / KCTC 9906 / NCIMB 13794 / A6) (Arthrobacter chlorophenolicus).